We begin with the raw amino-acid sequence, 245 residues long: Probable transcriptional regulatory protein Cbei_4222 (245 aa).

Belongs to the TACO1 family.

The protein localises to the cytoplasm. This chain is Probable transcriptional regulatory protein Cbei_4222, found in Clostridium beijerinckii (strain ATCC 51743 / NCIMB 8052) (Clostridium acetobutylicum).